Reading from the N-terminus, the 896-residue chain is MSVKASGGSSLARPQLYQTVPVSAISQAEQQDRFLEGSELNELTAYFQSGALRLEIAETLTQNADLIVSRAANRIFTGGSPLSYLEKPVERQPALVGASSDSRNGSVTYAESNGSGGLFGGLRSVFSSTGPIPPGFRPINIARYGPSNMQKSLRDMSWFLRYTTYAIVAGDPNIIVVNTRGLKEVIENACSIDATIVAIQEMRAASADYFRNNAQAKEIVLQYFDILLSEFKAPTPANKVRQGPSNDIQGLELPQSYFNAAAKRQKYAMKPGLSALEKNAVIKAAYRQIFERDITKAYSQSISYLESQVRNGDISMKEFVRRLAKSPLYRKQFFEPFINSRALELAFRHILGRGPSSREEVQKYFSIVSSGGLPALVDALVDSQEYADYFGEETVPYLRGLGVEAQECRNWGMQQDLFSYSAPFRKVPQFITTFAQYDRPLPDQHVYGSGNDPLEIQFGAIFPKETRNPSKRPAPFNKDTKRILIHRGPAVNNQVGNPSAVGEFPGSLGAKVFRLNGGLPGAKVGKNTGTSVKFGESSTQALIRAAYRQVFGRDLYEGQRLSVAEIQLENGDISVREFIKRLAKSELFLKLYWAPHYVCKAIEYMHRRLLGRPTYGRQEMNQYFDIASKQGFYAVVEAMIDSKEYSDAFGEDTVPYERYLTPGGLQMRSARVGSLREDIGQRVDKEVTPRFVELGQVSAIRTEPEIAYRSNQGVTRQRQQTKVFKLVSTYDKVAVKNAIRAAYRQVFERDLEPYIINSEFTALESKLSNNEINVKEFIEGLGTSELYMKEFYAPYPNTKVIEMGTKHFLGRAPLNQKEIQQYNQILASQGLKAFIGAMVNGMEYLQTFGEDTVPYRRFPTLPAANFPNTERLYNKLTKQDKELVVPSFTPVVKVGG.

Position 190 (cysteine 190) interacts with (2R,3E)-phycocyanobilin. 3 consecutive PBS-linker domains span residues 247–427 (DIQG…FRKV), 508–684 (LGAK…QRVD), and 703–881 (EPEI…KQDK).

The protein belongs to the phycobilisome linker protein family. As to quaternary structure, heterodimer of ApcF (a variant beta-allophycocyanin). Phycobilisomes of this organism are composed of a two cylinder core, from which six rods radiate. The core is mainly composed of allophycocyanin alpha and beta chains and of minor components. Post-translationally, contains one covalently linked bilin chromophore. This protein autochromophorylates.

The protein localises to the cellular thylakoid membrane. In terms of biological role, this protein is postulated to act both as terminal energy acceptor (by its phycobilin-like domains) and as a linker polypeptide (by its repeats and arms) that stabilizes the phycobilisome core architecture. Has intrinsic bilin lyase activity. The sequence is that of Phycobiliprotein ApcE (apcE) from Synechocystis sp. (strain ATCC 27184 / PCC 6803 / Kazusa).